The following is a 97-amino-acid chain: Aspartyl/glutamyl-tRNA(Asn/Gln) amidotransferase subunit C (97 aa).

Belongs to the GatC family. Heterotrimer of A, B and C subunits.

The enzyme catalyses L-glutamyl-tRNA(Gln) + L-glutamine + ATP + H2O = L-glutaminyl-tRNA(Gln) + L-glutamate + ADP + phosphate + H(+). The catalysed reaction is L-aspartyl-tRNA(Asn) + L-glutamine + ATP + H2O = L-asparaginyl-tRNA(Asn) + L-glutamate + ADP + phosphate + 2 H(+). Allows the formation of correctly charged Asn-tRNA(Asn) or Gln-tRNA(Gln) through the transamidation of misacylated Asp-tRNA(Asn) or Glu-tRNA(Gln) in organisms which lack either or both of asparaginyl-tRNA or glutaminyl-tRNA synthetases. The reaction takes place in the presence of glutamine and ATP through an activated phospho-Asp-tRNA(Asn) or phospho-Glu-tRNA(Gln). The sequence is that of Aspartyl/glutamyl-tRNA(Asn/Gln) amidotransferase subunit C from Synechococcus sp. (strain CC9311).